We begin with the raw amino-acid sequence, 573 residues long: MAVLNQMSVLDMIKAFRRNWRAHCNSERTTLCGPDSMLLALQLSMAENNKQHHGEFTVCLSDVLLTWKYFLHEKLNLPIENMKVVDHYEDIRKTYDDFLKNSNTLDLIDVYKKCSIMTSNCEKHMISSIQLRDFLSGTECAVNDENNPHSPASPVKCSQNDKQVRLLAKKIFLSYLSLLVNSKNDLALAQILNTPDRGLGREAFTNLKHAAREKQLSMFLMATSFIRTLELGGKGYAPPPSDPLWAHVKGLSAFVNFIDKLNEILGEVPNPSLAGGRILSAIRTQLIKGHSSGEPFYKAVEEVVQDLNLRIKNIINSQEGVTVSATNISPVPPKSFAINHDTAYCGRDAVKILLVLLDEDAASAPTRNKAELLYNDQSTAPHGGASVLTLFRSPTQVKSTPVKPLRERIHTSLQAEKNKQMRQTLIRSQFACTYKDDCIMSKSKWNVNSSSKPLSALRLENDVSEGAQPSVGKARLETSSENVHVDRSKDDKGPRKSTKRKLAKSKQPGVREDIHCDQGDELYQPKNVKILKVPSDSHRKAGGKLAPGARGNRCTTKDKLIPGQTKLTRFFML.

Positions 463-511 are disordered; that stretch reads VSEGAQPSVGKARLETSSENVHVDRSKDDKGPRKSTKRKLAKSKQPGVR. The segment covering 474–494 has biased composition (basic and acidic residues); it reads ARLETSSENVHVDRSKDDKGP. The segment covering 495 to 504 has biased composition (basic residues); that stretch reads RKSTKRKLAK.

This sequence belongs to the PARI family. Interacts with RAD51 and PCNA. Interacts with PARP1. Interacts with TASOR. Present in testis (at protein level). Expressed in testis, gastrointestinal tract (jejunum, ileum, and colon) and immune system (thymus and spleen). Weakly expressed in lung, kidney, pituitary gland and muscle.

It is found in the cytoplasm. It localises to the nucleus. Required to suppress inappropriate homologous recombination, thereby playing a central role DNA repair and in the maintenance of genomic stability. Antagonizes homologous recombination by interfering with the formation of the RAD51-DNA homologous recombination structure. Positively regulate the poly(ADP-ribosyl)ation activity of PARP1; however such function may be indirect. Binds single-strand DNA and poly(A) homopolymers. This is PCNA-interacting partner (Parpbp) from Rattus norvegicus (Rat).